The chain runs to 565 residues: Liver carboxylesterase 1 (565 aa).

The signal sequence occupies residues 1 to 18 (MWLCALALASLAACTAWG). An N-linked (GlcNAc...) asparagine glycan is attached at Asn-79. Cys-87 and Cys-116 are oxidised to a cystine. Ser-221 (acyl-ester intermediate) is an active-site residue. Residues Cys-273 and Cys-284 are joined by a disulfide bond. The active-site Charge relay system is Glu-353. Asn-389 carries an N-linked (GlcNAc...) asparagine glycan. His-467 functions as the Charge relay system in the catalytic mechanism. A short sequence motif (prevents secretion from ER) is located at residue Leu-565.

Belongs to the type-B carboxylesterase/lipase family. Monomer.

It localises to the endoplasmic reticulum lumen. It carries out the reaction a carboxylic ester + H2O = an alcohol + a carboxylate + H(+). Functionally, involved in the detoxification of xenobiotics and in the activation of ester and amide prodrugs. This Oryctolagus cuniculus (Rabbit) protein is Liver carboxylesterase 1.